A 251-amino-acid polypeptide reads, in one-letter code: Ribosomal RNA small subunit methyltransferase G (251 aa).

S-adenosyl-L-methionine contacts are provided by residues G74, F79, 125–126, and R144; that span reads AE. Residues 224–251 form a disordered region; that stretch reads RPAGLPTQHPLGAIEGAPRVESEEPEEP.

It belongs to the methyltransferase superfamily. RNA methyltransferase RsmG family.

Its subcellular location is the cytoplasm. Functionally, specifically methylates the N7 position of a guanine in 16S rRNA. The protein is Ribosomal RNA small subunit methyltransferase G of Gloeobacter violaceus (strain ATCC 29082 / PCC 7421).